The primary structure comprises 78 residues: uncharacterized protein (78 aa).

2 helical membrane-spanning segments follow: residues 25–45 (IITA…DEVV) and 50–70 (KCAD…FVFV).

The protein localises to the membrane. This is an uncharacterized protein from Saccharomyces cerevisiae (strain ATCC 204508 / S288c) (Baker's yeast).